We begin with the raw amino-acid sequence, 194 residues long: RFKKIRRLGALPGLTSKRPRSGSDLKNQLRSGKRSQYRIRLEEKQKLRFHYGLTERQLLKYVHIAGKAKGSTGRVLLQLLEMRLDNILFRLGMASTIPGARQLVNHRHILVNGRIVDIPSYRCKPQDIITTKDKERSKVLIQNYIASSSHEELPNHLTIDPLQYKGLVNQIIDRKWVGLKINELLVVEYYSRQT.

The region spanning 82–143 (MRLDNILFRL…KERSKVLIQN (62 aa)) is the S4 RNA-binding domain.

Belongs to the universal ribosomal protein uS4 family. Part of the 30S ribosomal subunit. Contacts protein S5. The interaction surface between S4 and S5 is involved in control of translational fidelity.

The protein localises to the plastid. Its subcellular location is the chloroplast. In terms of biological role, one of the primary rRNA binding proteins, it binds directly to 16S rRNA where it nucleates assembly of the body of the 30S subunit. With S5 and S12 plays an important role in translational accuracy. The sequence is that of Small ribosomal subunit protein uS4c (rps4) from Trimezia steyermarkii (Steyermark's trimezia).